The primary structure comprises 1582 residues: MSSLDPSLSTTPSTNRRGTFSKAKSFRRAALNLEPQGTPGQPHAFRFLSGEEYSGPDIIENIKKPININIESEEYKTPLFLGANGTLYNKYYIPIKIIGIDEPLPQTGLSPSLSSSSSSSSSPSPPTTTSTTPPPPNNNNNSKQIKKNNSISDLTPYLNFNSTDQIYTSFPESMAFDDYMDYEESLVEWKRQVEQNLGIIQLPHSIGRTYPRPKVIHEQLFRKNSEASNDDSISYDIERKLTDSDIKETNSSVNDDGESFSHSPTLRGNNGSSLSVGGGGDNHDNTSNKDNASSQGTNHGVTLNHPNSGINLRERSNSDTSTGSFEGTQLDGSSPMDGSPSTGSLAGFVANGTRSRTNSITYFDQRNQRSNSLSPKHSMLQSRLADSQSLDSSMYGKMGRSGSGFGMDHESWFLQKDPWDSQLILTEPHPDLFSTYEEYEYAMKNWAHEVITKTSILPPHPGQFIQLPKNSELSTDDGSGGGSGGSGVDGVGGNHQLGGSARHMLEMDFEMAKNQSNWTLRPIIRPIITEETMIFNRILSQSNLKHTEYDHLFSIDQELPPSQVWKTLDSDEKLKITETIDRWYRKKLTIQRQTSTWFRGGLWANHFLMPNIQSGWRESVSKKSSILPPLSLKALRRLDINSEADGKRVEHSFPIPELPINFNKLLAPDMNLQYFLGMLEMPTAHSLSSATGGQQQGGSGGGSGGSGSGSGSGSGLNMSGTSGSSGKSEKDKDKETANYIAMHSINNTTNVGTKEDRRQYTKILQTYEQRLQFSFRLDALNSWSEGGYTPMELQEKKLDIEQLVAAPGFDLQNGVWSLVNNSAHFLDKFQETFDQVDLRLYAPAIPMLPAIVPSVFINAGGGSGGGSGGASGGGISTSSGTSPNIVRPGSSSIGGGQPPSSPHIPSGSSLLSSPPNRQGSTGSFSFIGSPGGGGKISPTNSSSLESPRTQSQLAAVVERGSSPRSHSGGSISTHPNTPSVSSNTFLSLINTDSFPELLKFLDLTNEKLALGKISSLVLLVLTSELKGTMVIENILFSKDLQSLYRLARAISFFDAVPLDLFTYPTHLNEMLTPSIFKGSTQEVVRLVFVYYYLGIIQERLNFFSNNVGILGFVNSSRKDAAERIGIQFQNDREFLYKIFKALGRKSILVSNCFLFVLIQLIKMSESPTVQSLLKGELLTHIRDLSASKFSHSRFAAKRLYQILQEDPWKEFLMASYAESIKKNESQHLTDLTTMKEGPKLAIPSISLISELTFNFCVGVLENINSTPIPKPIYKFILNDSIFFQLCNAIVKCKNFTQSTQIVSKVFASLCKVLAKFNLFKNSDSIKSGGKVDPKKQNDVETGVAISPTLLFEIIGFLQNSSLDNNRYCSIIKTNMLIALRQLLKQSEIFDSIKKEGNLYNKFLIPACRDGKNVEFNRNVWRLFFQMIRFHHGHIEYLEKSKYLNALMDIISLNAGNVVLTNALHYLSKLFSLVSYETRKNALRAPGTLSIDTKYSEKDVKSLLNFFVERSCFIKFHMIYKKLTENTEGIQIDQRLLINITTFYRIISFLPSCQKLLKDTLKNPEYKTGIIQVSKMYKPSETF.

Low complexity-rich tracts occupy residues 1 to 14 and 109 to 131; these read MSSLDPSLSTTPST and LSPSLSSSSSSSSSPSPPTTTST. Disordered regions lie at residues 1-22 and 108-147; these read MSSLDPSLSTTPSTNRRGTFSK and GLSPSLSSSSSSSSSPSPPTTTSTTPPPPNNNNNSKQIKK. The stretch at 4–37 is one TPR 1 repeat; it reads LDPSLSTTPSTNRRGTFSKAKSFRRAALNLEPQG. The TPR 2 repeat unit spans residues 166 to 199; sequence IYTSFPESMAFDDYMDYEESLVEWKRQVEQNLGI. The interval 246–349 is disordered; that stretch reads IKETNSSVND…PSTGSLAGFV (104 aa). 3 stretches are compositionally biased toward polar residues: residues 249–267, 288–310, and 318–332; these read TNSSVNDDGESFSHSPTLR, NKDNASSQGTNHGVTLNHPNSGI, and SDTSTGSFEGTQLDG. S359 is subject to Phosphoserine; by PKB. Positions 400-600 are gefA and gefH binding; the sequence is RSGSGFGMDH…QRQTSTWFRG (201 aa). Disordered stretches follow at residues 468 to 493 and 686 to 734; these read PKNSELSTDDGSGGGSGGSGVDGVGG and SLSS…DKDK. Composition is skewed to gly residues over residues 478–493 and 694–714; these read GSGGGSGGSGVDGVGG and QQQGGSGGGSGGSGSGSGSGS. Residues 715–726 are compositionally biased toward low complexity; the sequence is GLNMSGTSGSSG. Residues 742–777 form a TPR 3 repeat; that stretch reads MHSINNTTNVGTKEDRRQYTKILQTYEQRLQFSFRL. Residues 864-875 show a composition bias toward gly residues; the sequence is GGGSGGASGGGI. The tract at residues 864–978 is disordered; it reads GGGSGGASGG…GSISTHPNTP (115 aa). A compositionally biased stretch (low complexity) spans 903–928; the sequence is HIPSGSSLLSSPPNRQGSTGSFSFIG. The segment covering 940–953 has biased composition (polar residues); the sequence is NSSSLESPRTQSQL. The segment covering 960–972 has biased composition (low complexity); the sequence is GSSPRSHSGGSIS. The interval 1000–1400 is pppA and pho2B binding; that stretch reads FLDLTNEKLA…SIKKEGNLYN (401 aa). One copy of the TPR 4 repeat lies at 1080 to 1113; it reads TQEVVRLVFVYYYLGIIQERLNFFSNNVGILGFV.

In terms of assembly, component of the Sca1 complex composed of at least gefA, gefH, scaA, phr, and the protein phosphatase 2A subunits pppA and pho2B. Post-translationally, phosphorylated at Ser-359 by PKB and PKBR1 is induced by chemoattractant.

Its subcellular location is the cell membrane. Functionally, component of the Sca1 complex, a regulator of cell motility, chemotaxis and signal relay. The Sca1 complex is recruited to the plasma membrane in a chemoattractant- and F-actin-dependent manner and is enriched at the leading edge of chemotaxing cells where it regulates F-actin dynamics and signal relay by controlling the activation of rasC and the downstream target of rapamycin complex 2 (TORC2)-Akt/protein kinase B (PKB) pathway. ScaA acts as a molecular scaffold, bringing together gefA, gefH and phr with PP2A. This Dictyostelium discoideum (Social amoeba) protein is Sca1 complex scaffold protein scaA.